Here is a 447-residue protein sequence, read N- to C-terminus: N-succinylarginine dihydrolase (447 aa).

Substrate contacts are provided by residues 19–28 (AGLSFGNEAS), asparagine 110, and 137–138 (HR). Residue glutamate 174 is part of the active site. Arginine 212 provides a ligand contact to substrate. Histidine 248 is an active-site residue. Substrate is bound by residues aspartate 250 and asparagine 359. The Nucleophile role is filled by cysteine 365.

This sequence belongs to the succinylarginine dihydrolase family. Homodimer.

It catalyses the reaction N(2)-succinyl-L-arginine + 2 H2O + 2 H(+) = N(2)-succinyl-L-ornithine + 2 NH4(+) + CO2. It functions in the pathway amino-acid degradation; L-arginine degradation via AST pathway; L-glutamate and succinate from L-arginine: step 2/5. Functionally, catalyzes the hydrolysis of N(2)-succinylarginine into N(2)-succinylornithine, ammonia and CO(2). This Citrobacter koseri (strain ATCC BAA-895 / CDC 4225-83 / SGSC4696) protein is N-succinylarginine dihydrolase.